Reading from the N-terminus, the 580-residue chain is mRNA-decapping enzyme 1A (580 aa).

S62 carries the phosphoserine modification. Over residues 132 to 141 the composition is skewed to basic and acidic residues; sequence RSQQAARDKQ. 3 disordered regions span residues 132–154, 172–209, and 245–276; these read RSQQ…DHRP, QMGD…QDKS, and LPGD…NMGI. Phosphoserine occurs at positions 142, 179, and 180. Over residues 173 to 196 the composition is skewed to polar residues; it reads MGDSNISSPGLQPSTQISNLGSTE. Positions 253 to 264 are enriched in low complexity; that stretch reads EPSSFLPFSFEP. Phosphoserine is present on residues S319 and S334. The span at 343–359 shows a compositional bias: polar residues; the sequence is QAVKTTPRQRSPLSSQP. A disordered region spans residues 343 to 371; it reads QAVKTTPRQRSPLSSQPVPELSQASLAAS. Position 348 is a phosphothreonine (T348). A Phosphoserine modification is found at S353. Asymmetric dimethylarginine is present on R376. At T401 the chain carries Phosphothreonine. 4 positions are modified to phosphoserine: S422, S520, S521, and S523. A disordered region spans residues 510–533; the sequence is TRSSDLERKASSPSPLTVGTSENQ. Residues 520–531 are compositionally biased toward polar residues; that stretch reads SSPSPLTVGTSE. A phosphothreonine mark is found at T526 and T529.

It belongs to the DCP1 family. Forms a complex with EDC3, DCP2, DDX6 and EDC4/HEDLS, within this complex directly interacts with EDC3. Part of a cytoplasmic complex containing proteins involved in mRNA decay, including XRN1 and LSM1. Interacts with DCP1B. Interacts with DCP2. Interacts with DDX17 in an RNA-independent manner. Interacts with PNRC2. Interacts with SMAD4. Interacts with UPF1. Interacts with ZC3HAV1. Interacts with ZFP36L1. Interacts with NBDY. Interacts with DHX34; the interaction is RNA-independent. (Microbial infection) Cleaved by porcine reproductive and respiratory syndrome virus serine protease nsp4 after Glu-238. The cleavage inhibits DCP1A function.

The protein resides in the cytoplasm. It is found in the P-body. The protein localises to the nucleus. It catalyses the reaction a 5'-end (N(7)-methyl 5'-triphosphoguanosine)-ribonucleoside in mRNA + H2O = N(7)-methyl-GDP + a 5'-end phospho-ribonucleoside in mRNA + 2 H(+). In terms of biological role, necessary for the degradation of mRNAs, both in normal mRNA turnover and in nonsense-mediated mRNA decay. Removes the 7-methyl guanine cap structure from mRNA molecules, yielding a 5'-phosphorylated mRNA fragment and 7m-GDP. Contributes to the transactivation of target genes after stimulation by TGFB1. Essential for embryonic development. This chain is mRNA-decapping enzyme 1A (DCP1A), found in Sus scrofa (Pig).